We begin with the raw amino-acid sequence, 56 residues long: Ovomucoid (56 aa).

Residues Val6–Cys56 enclose the Kazal-like domain. 3 cysteine pairs are disulfide-bonded: Cys8/Cys38, Cys16/Cys35, and Cys24/Cys56. Residue Asn45 is glycosylated (N-linked (GlcNAc...) asparagine).

It localises to the secreted. This chain is Ovomucoid, found in Pavo cristatus (Indian peafowl).